The following is a 131-amino-acid chain: uncharacterized protein (131 aa).

One can recognise an MSP domain in the interval 14 to 130 (FLLIYSSLEV…RRLPASFLST (117 aa)).

This is an uncharacterized protein from Caenorhabditis elegans.